Here is a 135-residue protein sequence, read N- to C-terminus: MVSRDFDRDKRLLTARQFSAVFDSPTGKVPGKHVLLLARENGLDHPRLGLVIGKKNVKLAVQRNRLKRLIRESFRHNQETLAGWDIVVIARKGLGELENPELHQQFGKLWKRLLRNRPRTESPADAPGVADGTHA.

Belongs to the RnpA family. Consists of a catalytic RNA component (M1 or rnpB) and a protein subunit.

The enzyme catalyses Endonucleolytic cleavage of RNA, removing 5'-extranucleotides from tRNA precursor.. In terms of biological role, RNaseP catalyzes the removal of the 5'-leader sequence from pre-tRNA to produce the mature 5'-terminus. It can also cleave other RNA substrates such as 4.5S RNA. The protein component plays an auxiliary but essential role in vivo by binding to the 5'-leader sequence and broadening the substrate specificity of the ribozyme. In Pseudomonas aeruginosa (strain ATCC 15692 / DSM 22644 / CIP 104116 / JCM 14847 / LMG 12228 / 1C / PRS 101 / PAO1), this protein is Ribonuclease P protein component.